Consider the following 65-residue polypeptide: uncharacterized protein (65 aa).

The Nucleophile role is filled by Cys-9. Arg-15 is an active-site residue.

The protein belongs to the low molecular weight phosphotyrosine protein phosphatase family.

This is an uncharacterized protein from Synechococcus sp. (strain WH8020).